Reading from the N-terminus, the 429-residue chain is Gamma-glutamyl phosphate reductase (429 aa).

The protein belongs to the gamma-glutamyl phosphate reductase family.

Its subcellular location is the cytoplasm. It carries out the reaction L-glutamate 5-semialdehyde + phosphate + NADP(+) = L-glutamyl 5-phosphate + NADPH + H(+). It functions in the pathway amino-acid biosynthesis; L-proline biosynthesis; L-glutamate 5-semialdehyde from L-glutamate: step 2/2. Its function is as follows. Catalyzes the NADPH-dependent reduction of L-glutamate 5-phosphate into L-glutamate 5-semialdehyde and phosphate. The product spontaneously undergoes cyclization to form 1-pyrroline-5-carboxylate. This is Gamma-glutamyl phosphate reductase from Rhizorhabdus wittichii (strain DSM 6014 / CCUG 31198 / JCM 15750 / NBRC 105917 / EY 4224 / RW1) (Sphingomonas wittichii).